Consider the following 464-residue polypeptide: UDP-glycosyltransferase 76C1 (464 aa).

UDP-alpha-D-glucose is bound by residues serine 279, 338 to 340 (APQ), 355 to 363 (HNGWNSTLE), and 377 to 380 (KWDQ).

The protein belongs to the UDP-glycosyltransferase family.

With respect to regulation, inhibited by olomoucine and 3-isobutyl-1-methylxanthine. Involved in the N-glucosylation of cytokinins. Catalyzes the formation of both the 7-N and the 9-N-glucosides. This chain is UDP-glycosyltransferase 76C1 (UGT76C1), found in Arabidopsis thaliana (Mouse-ear cress).